The chain runs to 303 residues: E3 ubiquitin-protein ligase CHIP (303 aa).

Positions 1 to 10 are enriched in basic and acidic residues; sequence MKGKEEKEGG. Positions 1-30 are disordered; that stretch reads MKGKEEKEGGARLGAGGGSPEKSPSAQELK. Lys2 is covalently cross-linked (Glycyl lysine isopeptide (Lys-Gly) (interchain with G-Cter in ubiquitin)). Ser19 bears the Phosphoserine mark. Residue Lys22 forms a Glycyl lysine isopeptide (Lys-Gly) (interchain with G-Cter in ubiquitin) linkage. Residues Ser23 and Ser25 each carry the phosphoserine modification. 3 TPR repeats span residues 26–59, 60–93, and 95–127; these read AQEL…NPLV, AVYY…DGQS, and KAHF…AKEQ. Residues 101–200 form a required for interaction with MAPK7 region; it reads GQCQLEMESY…SHVRAQQACI (100 aa). The segment at 142-196 is required for interaction with and ubiquitination of MYOCD; the sequence is AKKKRWNSIEERRIHQESELHSYLSRLIAAERERELEECQRNHEGDEDDSHVRAQ. The interval 143-197 is required for interaction with FOXO1; that stretch reads KKKRWNSIEERRIHQESELHSYLSRLIAAERERELEECQRNHEGDEDDSHVRAQQ. The segment at 143–303 is required for ubiquitination of FOXO1; the sequence is KKKRWNSIEE…ISENGWVEDY (161 aa). Ser149 carries the phosphoserine modification. Residues Lys221 and Lys255 each participate in a glycyl lysine isopeptide (Lys-Gly) (interchain with G-Cter in ubiquitin) cross-link. The U-box domain maps to 226 to 300; that stretch reads DIPDYLCGKI…DAFISENGWV (75 aa). The residue at position 273 (Ser273) is a Phosphoserine.

Homodimer. Interacts with BAG2. Interacts with E2 ubiquitin conjugating enzymes UBE2D1, UBE2D2 and UBE2D3. Detected in a ternary complex containing STUB1, HSPA1A and HSPBP1. Part of a complex composed of STUB1/CHIP, VCP/p97, CHRNA3, and UBXN2A that modulates the ubiquitination and endoplasmic reticulum-associated degradation (ERAD) of CHRNA3. Within the complex UBXN2A acts as a scaffold protein required for the interaction of CHRNA3 with VCP/p97, this interaction also inhibits CHRNA3 ubiquitination by STUB1/CHIP and subsequently ERAD. Interacts with MKKS. Interacts with DNAAF4. Interacts (when monoubiquitinated) with ATXN3. Interacts with UBE2W. Interacts (via the U-box domain) with the UBE2V2-UBE2N heterodimer; the complex has a specific 'Lys-63'-linked polyubiquitination activity. Interacts with DNAJB6. Interacts with FLCN. Interacts with HSP90AA1. Interacts with HSP90. Interacts with UBE2N and UBE2V1. Interacts (via TPR repeats) with HSPA8 (via C-terminus). Interacts (via TPR repeats) with HSPA1A (via C-terminus). Interacts with the non-acetylated form of HSPA1A and HSPA1B. Interacts with SMAD3 and HSP90AB1. Interacts with UBE4B. Interacts with PRMT5. Interacts with MYOCD (via C-terminus). Interacts with FOXO1 (when phosphorylated on 'Ser-256'). Interacts with MAPK7/ERK5; the interaction is enhanced in the presence of IGF1 or MAP2K5 and promotes STUB1/CHIP E3 ligase activity. Interacts with and ubiquitinates ESR1; the interaction is promoted in the absence of estradiol (17-beta-estradiol/E2). Interacts with ESR2. Interacts with and ubiquitinates NFATC3; HSPA1A/HSP70 is required as a co-chaperone. In macrophages, interacts with PAQR3; the interaction promotes PPARG poylubiquitination and STUB1-mediated degradation. Component of the chaperone-assisted selective autophagy (CASA) complex consisting of BAG3, HSPA8/HSC70, HSPB8 and STUB1/CHIP. Monoubiquitinated at Lys-2 following cell stress by UBE2W, promoting the interaction with ATXN3. Auto-ubiquitinated; mediated by UBE2D1 and UBE2D2 and enhanced in the presence of MAP2K5. In terms of tissue distribution, expressed in differentiated myotubes (at protein level). Highly expressed in skeletal muscle, heart, pancreas, brain and placenta. Detected in kidney, liver and lung.

The protein localises to the cytoplasm. The protein resides in the nucleus. It localises to the mitochondrion. It carries out the reaction S-ubiquitinyl-[E2 ubiquitin-conjugating enzyme]-L-cysteine + [acceptor protein]-L-lysine = [E2 ubiquitin-conjugating enzyme]-L-cysteine + N(6)-ubiquitinyl-[acceptor protein]-L-lysine.. Its pathway is protein modification; protein ubiquitination. Its function is as follows. E3 ubiquitin-protein ligase which targets misfolded chaperone substrates towards proteasomal degradation. Plays a role in the maintenance of mitochondrial morphology and promotes mitophagic removal of dysfunctional mitochondria; thereby acts as a protector against apoptosis in response to cellular stress. Negatively regulates vascular smooth muscle contraction, via degradation of the transcriptional activator MYOCD and subsequent loss of transcription of genes involved in vascular smooth muscle contraction. Promotes survival and proliferation of cardiac smooth muscle cells via ubiquitination and degradation of FOXO1, resulting in subsequent repression of FOXO1-mediated transcription of pro-apoptotic genes. Ubiquitinates ICER-type isoforms of CREM and targets them for proteasomal degradation, thereby acts as a positive effector of MAPK/ERK-mediated inhibition of apoptosis in cardiomyocytes. Inhibits lipopolysaccharide-induced apoptosis and hypertrophy in cardiomyocytes, via ubiquitination and subsequent proteasomal degradation of NFATC3. Collaborates with ATXN3 in the degradation of misfolded chaperone substrates: ATXN3 restricting the length of ubiquitin chain attached to STUB1/CHIP substrates and preventing further chain extension. Ubiquitinates NOS1 in concert with Hsp70 and Hsp40. Modulates the activity of several chaperone complexes, including Hsp70, Hsc70 and Hsp90. Ubiquitinates CHRNA3 targeting it for endoplasmic reticulum-associated degradation in cortical neurons, as part of the STUB1-VCP-UBXN2A complex. Ubiquitinates and promotes ESR1 proteasomal degradation in response to age-related circulating estradiol (17-beta-estradiol/E2) decline, thereby promotes neuronal apoptosis in response to ischemic reperfusion injury. Mediates transfer of non-canonical short ubiquitin chains to HSPA8 that have no effect on HSPA8 degradation. Mediates polyubiquitination of DNA polymerase beta (POLB) at 'Lys-41', 'Lys-61' and 'Lys-81', thereby playing a role in base-excision repair: catalyzes polyubiquitination by amplifying the HUWE1/ARF-BP1-dependent monoubiquitination and leading to POLB-degradation by the proteasome. Mediates polyubiquitination of CYP3A4. Ubiquitinates EPHA2 and may regulate the receptor stability and activity through proteasomal degradation. Acts as a co-chaperone for HSPA1A and HSPA1B chaperone proteins and promotes ubiquitin-mediated protein degradation. Negatively regulates the suppressive function of regulatory T-cells (Treg) during inflammation by mediating the ubiquitination and degradation of FOXP3 in a HSPA1A/B-dependent manner. Catalyzes monoubiquitination of SIRT6, preventing its degradation by the proteasome. Likely mediates polyubiquitination and down-regulates plasma membrane expression of PD-L1/CD274, an immune inhibitory ligand critical for immune tolerance to self and antitumor immunity. Negatively regulates TGF-beta signaling by modulating the basal level of SMAD3 via ubiquitin-mediated degradation. Plays a role in the degradation of TP53. Mediates ubiquitination of RIPK3 leading to its subsequent proteasome-dependent degradation. May regulate myosin assembly in striated muscles together with UBE4B and VCP/p97 by targeting myosin chaperone UNC45B for proteasomal degradation. Ubiquitinates PPARG in macrophages playing a role in M2 macrophages polarization and angiogenesis. The protein is E3 ubiquitin-protein ligase CHIP of Homo sapiens (Human).